The chain runs to 971 residues: Kinesin-like protein KIN-14C (971 aa).

The region spanning 14–119 is the Calponin-homology (CH) domain; it reads ANRRAEVIDW…CLLALKDNVA (106 aa). Positions 272–357 form a coiled coil; sequence IKALETLVNG…QMETKARQME (86 aa). One can recognise a Kinesin motor domain in the interval 472 to 799; it reads NIRVYCRVRP…LKFAERVSGV (328 aa). 556–563 lines the ATP pocket; it reads GQTGSGKT. Positions 809–844 form a coiled coil; sequence EGKDIKELLEQVASLKDTIARKDMEIEQLQLLKSKS. A compositionally biased stretch (polar residues) spans 839 to 881; sequence LLKSKSPNSMTDRNGSNLLRQSTSSTGLSSLPVASQQNQQLSG. Residues 839–971 form a disordered region; the sequence is LLKSKSPNSM…GSLAKPSKRR (133 aa).

This sequence belongs to the TRAFAC class myosin-kinesin ATPase superfamily. Kinesin family. KIN-14 subfamily.

This chain is Kinesin-like protein KIN-14C, found in Oryza sativa subsp. japonica (Rice).